Here is a 300-residue protein sequence, read N- to C-terminus: N-acetylmuramic acid 6-phosphate etherase (300 aa).

The SIS domain maps to 55-217; it reads IAERLRAGGR…STGAMIRLGK (163 aa). Glu-83 acts as the Proton donor in catalysis. Glu-114 is a catalytic residue.

It belongs to the GCKR-like family. MurNAc-6-P etherase subfamily. In terms of assembly, homodimer.

The enzyme catalyses N-acetyl-D-muramate 6-phosphate + H2O = N-acetyl-D-glucosamine 6-phosphate + (R)-lactate. It functions in the pathway amino-sugar metabolism; N-acetylmuramate degradation. Its function is as follows. Specifically catalyzes the cleavage of the D-lactyl ether substituent of MurNAc 6-phosphate, producing GlcNAc 6-phosphate and D-lactate. This Symbiobacterium thermophilum (strain DSM 24528 / JCM 14929 / IAM 14863 / T) protein is N-acetylmuramic acid 6-phosphate etherase.